We begin with the raw amino-acid sequence, 429 residues long: U3 small nucleolar RNA-associated protein 18 homolog (429 aa).

WD repeat units lie at residues 117 to 156 (RYTR…KKDR), 295 to 336 (TDDG…NSTN), 345 to 386 (NLVT…TFKN), and 392 to 428 (GKVT…HFTD).

The protein belongs to the WD repeat UTP18 family.

It is found in the nucleus. The protein resides in the nucleolus. Functionally, involved in nucleolar processing of pre-18S ribosomal RNA. The chain is U3 small nucleolar RNA-associated protein 18 homolog from Caenorhabditis elegans.